Here is a 33-residue protein sequence, read N- to C-terminus: Photosystem II reaction center protein Psb30 (33 aa).

Residues 5 to 25 form a helical membrane-spanning segment; the sequence is ILSQLIAIAVTLFLGPVVVIL.

It belongs to the Psb30/Ycf12 family. PSII is composed of 1 copy each of membrane proteins PsbA, PsbB, PsbC, PsbD, PsbE, PsbF, PsbH, PsbI, PsbJ, PsbK, PsbL, PsbM, PsbT, PsbX, PsbY, PsbZ, Psb30/Ycf12, peripheral proteins of the oxygen-evolving complex and a large number of cofactors. It forms dimeric complexes.

Its subcellular location is the plastid. The protein localises to the chloroplast thylakoid membrane. In terms of biological role, a core subunit of photosystem II (PSII), probably helps stabilize the reaction center. This Oedogonium cardiacum (Filamentous green alga) protein is Photosystem II reaction center protein Psb30.